Here is a 448-residue protein sequence, read N- to C-terminus: Thymidine phosphorylase (448 aa).

This sequence belongs to the thymidine/pyrimidine-nucleoside phosphorylase family. As to quaternary structure, homodimer.

It carries out the reaction thymidine + phosphate = 2-deoxy-alpha-D-ribose 1-phosphate + thymine. The protein operates within pyrimidine metabolism; dTMP biosynthesis via salvage pathway; dTMP from thymine: step 1/2. In terms of biological role, the enzymes which catalyze the reversible phosphorolysis of pyrimidine nucleosides are involved in the degradation of these compounds and in their utilization as carbon and energy sources, or in the rescue of pyrimidine bases for nucleotide synthesis. The chain is Thymidine phosphorylase from Vibrio cholerae serotype O1 (strain ATCC 39315 / El Tor Inaba N16961).